Reading from the N-terminus, the 86-residue chain is Large ribosomal subunit protein uL23 (86 aa).

This sequence belongs to the universal ribosomal protein uL23 family. In terms of assembly, part of the 50S ribosomal subunit. Contacts protein L29.

Binds to 23S rRNA. One of the proteins that surrounds the polypeptide exit tunnel on the outside of the ribosome. The protein is Large ribosomal subunit protein uL23 of Thermococcus gammatolerans (strain DSM 15229 / JCM 11827 / EJ3).